A 277-amino-acid polypeptide reads, in one-letter code: 4-hydroxy-3-methylbut-2-enyl diphosphate reductase (277 aa).

A [4Fe-4S] cluster-binding site is contributed by C12. (2E)-4-hydroxy-3-methylbut-2-enyl diphosphate is bound by residues H36 and H70. Residues H36 and H70 each contribute to the dimethylallyl diphosphate site. Isopentenyl diphosphate is bound by residues H36 and H70. C92 contributes to the [4Fe-4S] cluster binding site. H120 is a binding site for (2E)-4-hydroxy-3-methylbut-2-enyl diphosphate. H120 contacts dimethylallyl diphosphate. Position 120 (H120) interacts with isopentenyl diphosphate. E122 acts as the Proton donor in catalysis. A (2E)-4-hydroxy-3-methylbut-2-enyl diphosphate-binding site is contributed by T158. A [4Fe-4S] cluster-binding site is contributed by C186. Residues S214, N216, and S258 each contribute to the (2E)-4-hydroxy-3-methylbut-2-enyl diphosphate site. The dimethylallyl diphosphate site is built by S214, N216, and S258. The isopentenyl diphosphate site is built by S214, N216, and S258.

Belongs to the IspH family. [4Fe-4S] cluster is required as a cofactor.

It carries out the reaction isopentenyl diphosphate + 2 oxidized [2Fe-2S]-[ferredoxin] + H2O = (2E)-4-hydroxy-3-methylbut-2-enyl diphosphate + 2 reduced [2Fe-2S]-[ferredoxin] + 2 H(+). It catalyses the reaction dimethylallyl diphosphate + 2 oxidized [2Fe-2S]-[ferredoxin] + H2O = (2E)-4-hydroxy-3-methylbut-2-enyl diphosphate + 2 reduced [2Fe-2S]-[ferredoxin] + 2 H(+). It functions in the pathway isoprenoid biosynthesis; dimethylallyl diphosphate biosynthesis; dimethylallyl diphosphate from (2E)-4-hydroxy-3-methylbutenyl diphosphate: step 1/1. Its pathway is isoprenoid biosynthesis; isopentenyl diphosphate biosynthesis via DXP pathway; isopentenyl diphosphate from 1-deoxy-D-xylulose 5-phosphate: step 6/6. Its function is as follows. Catalyzes the conversion of 1-hydroxy-2-methyl-2-(E)-butenyl 4-diphosphate (HMBPP) into a mixture of isopentenyl diphosphate (IPP) and dimethylallyl diphosphate (DMAPP). Acts in the terminal step of the DOXP/MEP pathway for isoprenoid precursor biosynthesis. This Campylobacter jejuni subsp. jejuni serotype O:6 (strain 81116 / NCTC 11828) protein is 4-hydroxy-3-methylbut-2-enyl diphosphate reductase.